We begin with the raw amino-acid sequence, 432 residues long: Amino-acid acetyltransferase (432 aa).

Positions 286-425 constitute an N-acetyltransferase domain; the sequence is ERVREAAIED…ASLYNYQRNS (140 aa).

Belongs to the acetyltransferase family. ArgA subfamily.

Its subcellular location is the cytoplasm. It catalyses the reaction L-glutamate + acetyl-CoA = N-acetyl-L-glutamate + CoA + H(+). Its pathway is amino-acid biosynthesis; L-arginine biosynthesis; N(2)-acetyl-L-ornithine from L-glutamate: step 1/4. This Pseudomonas fluorescens (strain ATCC BAA-477 / NRRL B-23932 / Pf-5) protein is Amino-acid acetyltransferase.